Here is a 316-residue protein sequence, read N- to C-terminus: MSASFPHRHLTGIYGLQPHEILFLLDEAEQWIALNRATSKHDDRLAGLTLINAFFENSTRTLLSFEIAGKRLGADVVNMQVGASSVKKGETLIDTAMTLNAMRADMIVIRHQSSGAVQLIADKVDCPVLNAGDGRHEHPTQALLDALTIRRRKGRIAGLVVAICGDILHSRVARSNILALTTLGAEVRVVAPPTLMPAAIERMGAVPFHDFDAGLDGADVVMMLRLQNERMDGAYLPSPREFHALYGLTPERLERAAPDALVMHPGPMNRGVEITSSVADHPSRSAITEQVEMGVAVRMACLDVLTRRRRGVEGWA.

Positions 60 and 61 each coordinate carbamoyl phosphate. An L-aspartate-binding site is contributed by K88. R110, H138, and Q141 together coordinate carbamoyl phosphate. L-aspartate contacts are provided by R171 and R225. Positions 266 and 267 each coordinate carbamoyl phosphate.

The protein belongs to the aspartate/ornithine carbamoyltransferase superfamily. ATCase family. As to quaternary structure, heterododecamer (2C3:3R2) of six catalytic PyrB chains organized as two trimers (C3), and six regulatory PyrI chains organized as three dimers (R2).

The enzyme catalyses carbamoyl phosphate + L-aspartate = N-carbamoyl-L-aspartate + phosphate + H(+). Its pathway is pyrimidine metabolism; UMP biosynthesis via de novo pathway; (S)-dihydroorotate from bicarbonate: step 2/3. In terms of biological role, catalyzes the condensation of carbamoyl phosphate and aspartate to form carbamoyl aspartate and inorganic phosphate, the committed step in the de novo pyrimidine nucleotide biosynthesis pathway. The sequence is that of Aspartate carbamoyltransferase catalytic subunit from Rhizorhabdus wittichii (strain DSM 6014 / CCUG 31198 / JCM 15750 / NBRC 105917 / EY 4224 / RW1) (Sphingomonas wittichii).